A 427-amino-acid polypeptide reads, in one-letter code: Putative tyrosine recombinase XerC (427 aa).

One can recognise a Core-binding (CB) domain in the interval 1–81 (MTPQQLTEEY…HLRTIWGYAI (81 aa)). The Tyr recombinase domain maps to 116-305 (RARSWLSMQV…DYDHMRAVLH (190 aa)). Active-site residues include Arg156, Lys183, His256, Arg259, and His283. Catalysis depends on Tyr292, which acts as the O-(3'-phospho-DNA)-tyrosine intermediate. Disordered regions lie at residues 323 to 384 (SGSP…PPDT) and 401 to 427 (RAATASAVPAATSGSGGRGSAARDSLA). Residues 350-362 (ARTEPSEPREHTQ) show a composition bias toward basic and acidic residues. The segment covering 402-413 (AATASAVPAATS) has biased composition (low complexity).

It belongs to the 'phage' integrase family.

The protein localises to the cytoplasm. In terms of biological role, site-specific tyrosine recombinase, which acts by catalyzing the cutting and rejoining of the recombining DNA molecules. This Pseudomonas aeruginosa protein is Putative tyrosine recombinase XerC.